The sequence spans 80 residues: RNA-binding protein KhpA (80 aa).

The 48-residue stretch at Leu-33 to Asp-80 folds into the KH domain.

The protein belongs to the KhpA RNA-binding protein family. Forms a complex with KhpB.

The protein resides in the cytoplasm. Functionally, a probable RNA chaperone. Forms a complex with KhpB which binds to cellular RNA and controls its expression. Plays a role in peptidoglycan (PG) homeostasis and cell length regulation. In Treponema pallidum (strain Nichols), this protein is RNA-binding protein KhpA.